We begin with the raw amino-acid sequence, 37 residues long: Large ribosomal subunit protein bL36 (37 aa).

This sequence belongs to the bacterial ribosomal protein bL36 family.

The chain is Large ribosomal subunit protein bL36 from Legionella pneumophila subsp. pneumophila (strain Philadelphia 1 / ATCC 33152 / DSM 7513).